Reading from the N-terminus, the 238-residue chain is 1-(5-phosphoribosyl)-5-[(5-phosphoribosylamino)methylideneamino] imidazole-4-carboxamide isomerase (238 aa).

Aspartate 8 acts as the Proton acceptor in catalysis. Aspartate 129 (proton donor) is an active-site residue.

This sequence belongs to the HisA/HisF family.

It localises to the cytoplasm. It catalyses the reaction 1-(5-phospho-beta-D-ribosyl)-5-[(5-phospho-beta-D-ribosylamino)methylideneamino]imidazole-4-carboxamide = 5-[(5-phospho-1-deoxy-D-ribulos-1-ylimino)methylamino]-1-(5-phospho-beta-D-ribosyl)imidazole-4-carboxamide. It functions in the pathway amino-acid biosynthesis; L-histidine biosynthesis; L-histidine from 5-phospho-alpha-D-ribose 1-diphosphate: step 4/9. This chain is 1-(5-phosphoribosyl)-5-[(5-phosphoribosylamino)methylideneamino] imidazole-4-carboxamide isomerase, found in Lacticaseibacillus casei (strain BL23) (Lactobacillus casei).